The sequence spans 504 residues: ATP synthase subunit alpha 2 (504 aa).

169–176 (GDRQTGKT) contributes to the ATP binding site.

Belongs to the ATPase alpha/beta chains family. F-type ATPases have 2 components, CF(1) - the catalytic core - and CF(0) - the membrane proton channel. CF(1) has five subunits: alpha(3), beta(3), gamma(1), delta(1), epsilon(1). CF(0) has three main subunits: a(1), b(2) and c(9-12). The alpha and beta chains form an alternating ring which encloses part of the gamma chain. CF(1) is attached to CF(0) by a central stalk formed by the gamma and epsilon chains, while a peripheral stalk is formed by the delta and b chains.

It is found in the cell membrane. The enzyme catalyses ATP + H2O + 4 H(+)(in) = ADP + phosphate + 5 H(+)(out). In terms of biological role, produces ATP from ADP in the presence of a proton gradient across the membrane. The alpha chain is a regulatory subunit. This chain is ATP synthase subunit alpha 2, found in Listeria innocua serovar 6a (strain ATCC BAA-680 / CLIP 11262).